The sequence spans 72 residues: DNA-directed RNA polymerase subunit omega (72 aa).

It belongs to the RNA polymerase subunit omega family. In terms of assembly, the RNAP catalytic core consists of 2 alpha, 1 beta, 1 beta' and 1 omega subunit. When a sigma factor is associated with the core the holoenzyme is formed, which can initiate transcription.

The catalysed reaction is RNA(n) + a ribonucleoside 5'-triphosphate = RNA(n+1) + diphosphate. Promotes RNA polymerase assembly. Latches the N- and C-terminal regions of the beta' subunit thereby facilitating its interaction with the beta and alpha subunits. This chain is DNA-directed RNA polymerase subunit omega, found in Lactobacillus johnsonii (strain CNCM I-12250 / La1 / NCC 533).